We begin with the raw amino-acid sequence, 462 residues long: UDP-N-acetylmuramoylalanine--D-glutamate ligase (462 aa).

111–117 serves as a coordination point for ATP; it reads GTNGKTT.

This sequence belongs to the MurCDEF family.

It is found in the cytoplasm. The catalysed reaction is UDP-N-acetyl-alpha-D-muramoyl-L-alanine + D-glutamate + ATP = UDP-N-acetyl-alpha-D-muramoyl-L-alanyl-D-glutamate + ADP + phosphate + H(+). Its pathway is cell wall biogenesis; peptidoglycan biosynthesis. Cell wall formation. Catalyzes the addition of glutamate to the nucleotide precursor UDP-N-acetylmuramoyl-L-alanine (UMA). This chain is UDP-N-acetylmuramoylalanine--D-glutamate ligase, found in Trichodesmium erythraeum (strain IMS101).